The primary structure comprises 273 residues: SPbeta prophage-derived uncharacterized protein YomF (273 aa).

A coiled-coil region spans residues 119 to 149 (VIETLQGLIDEAEDTIIRMNERIAECERVTK).

In Bacillus subtilis (strain 168), this protein is SPbeta prophage-derived uncharacterized protein YomF (yomF).